A 438-amino-acid chain; its full sequence is Na(+)/H(+) antiporter NhaA (438 aa).

11 helical membrane passes run 23–43 (FGGI…NSFL), 62–82 (FFIG…LFFL), 104–124 (SFPV…YFFL), 133–153 (GFGI…MLLG), 162–182 (VFLI…IALF), 185–205 (TNLK…LAVL), 212–232 (SLIP…QSGI), 302–322 (FLAP…NAGV), 337–357 (LGVI…ITFI), 372–392 (WWHI…SMFI), and 410–430 (IAIL…LFVL).

The protein belongs to the NhaA Na(+)/H(+) (TC 2.A.33) antiporter family.

Its subcellular location is the cell inner membrane. The enzyme catalyses Na(+)(in) + 2 H(+)(out) = Na(+)(out) + 2 H(+)(in). Functionally, na(+)/H(+) antiporter that extrudes sodium in exchange for external protons. The sequence is that of Na(+)/H(+) antiporter NhaA from Helicobacter pylori (strain G27).